Reading from the N-terminus, the 209-residue chain is Large ribosomal subunit protein uL3 (209 aa).

Residues 118–152 (GFQGAIKRHGQSRGPMSHGSRYHRRPGSMGPVDPN) are disordered.

The protein belongs to the universal ribosomal protein uL3 family. In terms of assembly, part of the 50S ribosomal subunit. Forms a cluster with proteins L14 and L19.

Its function is as follows. One of the primary rRNA binding proteins, it binds directly near the 3'-end of the 23S rRNA, where it nucleates assembly of the 50S subunit. The chain is Large ribosomal subunit protein uL3 from Bacillus licheniformis (strain ATCC 14580 / DSM 13 / JCM 2505 / CCUG 7422 / NBRC 12200 / NCIMB 9375 / NCTC 10341 / NRRL NRS-1264 / Gibson 46).